The following is a 67-amino-acid chain: Large ribosomal subunit protein bL35 (67 aa).

It belongs to the bacterial ribosomal protein bL35 family.

The sequence is that of Large ribosomal subunit protein bL35 from Rhizobium johnstonii (strain DSM 114642 / LMG 32736 / 3841) (Rhizobium leguminosarum bv. viciae).